The chain runs to 689 residues: Glycine--tRNA ligase beta subunit (689 aa).

It belongs to the class-II aminoacyl-tRNA synthetase family. Tetramer of two alpha and two beta subunits.

The protein localises to the cytoplasm. It catalyses the reaction tRNA(Gly) + glycine + ATP = glycyl-tRNA(Gly) + AMP + diphosphate. The polypeptide is Glycine--tRNA ligase beta subunit (Dictyoglomus thermophilum (strain ATCC 35947 / DSM 3960 / H-6-12)).